A 242-amino-acid chain; its full sequence is tRNA (guanine-N(1)-)-methyltransferase (242 aa).

S-adenosyl-L-methionine is bound by residues glycine 111 and 130 to 135 (IGDYVL).

It belongs to the RNA methyltransferase TrmD family. Homodimer.

It localises to the cytoplasm. It catalyses the reaction guanosine(37) in tRNA + S-adenosyl-L-methionine = N(1)-methylguanosine(37) in tRNA + S-adenosyl-L-homocysteine + H(+). Specifically methylates guanosine-37 in various tRNAs. This Aster yellows witches'-broom phytoplasma (strain AYWB) protein is tRNA (guanine-N(1)-)-methyltransferase.